The chain runs to 481 residues: G-protein coupled receptor 37-like 1 (481 aa).

The signal sequence occupies residues 1–25 (MRWLWPLAVSLAVILAVGLSRVSGG). Disordered stretches follow at residues 26–58 (APLH…GVQQ) and 70–108 (PIHP…NLTG). The Extracellular segment spans residues 26–134 (APLHLGRHRA…ESSYSAYAIM (109 aa)). 2 O-linked (GalNAc...) threonine glycosylation sites follow: T79 and T85. Residue S86 is glycosylated (O-linked (GalNAc...) serine). O-linked (GalNAc...) threonine glycosylation occurs at T95. N105 is a glycosylation site (N-linked (GlcNAc...) asparagine). T107 carries an O-linked (GalNAc...) threonine glycan. A helical transmembrane segment spans residues 135 to 155 (LLALVVFAVGIVGNLSVMCIV). Over 156-167 (WHSYYLKSAWNS) the chain is Cytoplasmic. A helical membrane pass occupies residues 168–188 (ILASLALWDFLVLFFCLPIVI). The Extracellular portion of the chain corresponds to 189–205 (FNEITKQRLLGDVSCRA). C203 and C286 are disulfide-bonded. The chain crosses the membrane as a helical span at residues 206 to 226 (VPFMEVSSLGVTTFSLCALGI). At 227–251 (DRFHVATSTLPKVRPIERCQSILAK) the chain is on the cytoplasmic side. Residues 252–272 (LAVIWVGSMTLAVPELLLWQL) form a helical membrane-spanning segment. Topologically, residues 273–310 (AQEPAPTMGTLDSCIMKPSASLPESLYSLVMTYQNARM) are extracellular. A helical transmembrane segment spans residues 311 to 331 (WWYFGCYFCLPILFTVTCQLV). The Cytoplasmic segment spans residues 332–361 (TWRVRGPPGRKSECRASKHEQCESQLNSTV). A helical transmembrane segment spans residues 362–382 (VGLTVVYAFCTLPENVCNIVV). Over 383-398 (AYLSTELTRQTLDLLG) the chain is Extracellular. A helical membrane pass occupies residues 399–419 (LINQFSTFFKGAITPVLLLCI). Residues 420–481 (CRPLGQAFLD…PPLLPLGTPC (62 aa)) are Cytoplasmic-facing. Residue S471 is modified to Phosphoserine. T479 bears the Phosphothreonine mark.

This sequence belongs to the G-protein coupled receptor 1 family. In terms of assembly, interacts with the PTCH1 receptor. Post-translationally, O-glycosylated. Undergoes metalloprotease-mediated cleavage which reduces its constitutive activity. In terms of processing, ubiquitinated. Expressed in primary cortical astrocytes (at protein level). Expressed in the central nervous system.

The protein resides in the cell membrane. The protein localises to the cell projection. It is found in the cilium membrane. G-protein coupled receptor. Has been shown to bind the neuroprotective and glioprotective factor prosaposin (PSAP), leading to endocytosis followed by an ERK phosphorylation cascade. However, other studies have shown that prosaposin does not increase activity. It has been suggested that GPR37L1 is a constitutively active receptor which signals through the guanine nucleotide-binding protein G(s) subunit alpha. Participates in the regulation of postnatal cerebellar development by modulating the Shh pathway. Regulates baseline blood pressure in females and protects against cardiovascular stress in males. Mediates inhibition of astrocyte glutamate transporters and reduction in neuronal N-methyl-D-aspartate receptor activity. The sequence is that of G-protein coupled receptor 37-like 1 (GPR37L1) from Homo sapiens (Human).